The sequence spans 897 residues: Leucine--tRNA ligase (897 aa).

The 'HIGH' region signature appears at 42–52 (PYPSGKLHMGH). The short motif at 645–649 (TMSKS) is the 'KMSKS' region element. Lys648 provides a ligand contact to ATP.

Belongs to the class-I aminoacyl-tRNA synthetase family.

Its subcellular location is the cytoplasm. It carries out the reaction tRNA(Leu) + L-leucine + ATP = L-leucyl-tRNA(Leu) + AMP + diphosphate. The protein is Leucine--tRNA ligase of Paracidovorax citrulli (strain AAC00-1) (Acidovorax citrulli).